The primary structure comprises 120 residues: Large ribosomal subunit protein uL14 (120 aa).

Belongs to the universal ribosomal protein uL14 family. Part of the 50S ribosomal subunit. Forms a cluster with proteins L3 and L19. In the 70S ribosome, L14 and L19 interact and together make contacts with the 16S rRNA in bridges B5 and B8.

In terms of biological role, binds to 23S rRNA. Forms part of two intersubunit bridges in the 70S ribosome. The chain is Large ribosomal subunit protein uL14 from Dictyoglomus thermophilum (strain ATCC 35947 / DSM 3960 / H-6-12).